Consider the following 166-residue polypeptide: Endoribonuclease YbeY (166 aa).

Zn(2+) is bound by residues His132, His136, and His142.

This sequence belongs to the endoribonuclease YbeY family. Zn(2+) is required as a cofactor.

The protein resides in the cytoplasm. In terms of biological role, single strand-specific metallo-endoribonuclease involved in late-stage 70S ribosome quality control and in maturation of the 3' terminus of the 16S rRNA. In Clostridium botulinum (strain 657 / Type Ba4), this protein is Endoribonuclease YbeY.